The sequence spans 372 residues: Lipoyl synthase, mitochondrial (372 aa).

Residues cysteine 106, cysteine 111, cysteine 117, cysteine 137, cysteine 141, cysteine 144, and serine 352 each coordinate [4Fe-4S] cluster. A Radical SAM core domain is found at 122–341; that stretch reads EYGTATATIM…EKAGNELGFL (220 aa).

The protein belongs to the radical SAM superfamily. Lipoyl synthase family. Requires [4Fe-4S] cluster as cofactor.

The protein localises to the mitochondrion. The enzyme catalyses [[Fe-S] cluster scaffold protein carrying a second [4Fe-4S](2+) cluster] + N(6)-octanoyl-L-lysyl-[protein] + 2 oxidized [2Fe-2S]-[ferredoxin] + 2 S-adenosyl-L-methionine + 4 H(+) = [[Fe-S] cluster scaffold protein] + N(6)-[(R)-dihydrolipoyl]-L-lysyl-[protein] + 4 Fe(3+) + 2 hydrogen sulfide + 2 5'-deoxyadenosine + 2 L-methionine + 2 reduced [2Fe-2S]-[ferredoxin]. The protein operates within protein modification; protein lipoylation via endogenous pathway; protein N(6)-(lipoyl)lysine from octanoyl-[acyl-carrier-protein]: step 2/2. Functionally, catalyzes the radical-mediated insertion of two sulfur atoms into the C-6 and C-8 positions of the octanoyl moiety bound to the lipoyl domains of lipoate-dependent enzymes, thereby converting the octanoylated domains into lipoylated derivatives. The chain is Lipoyl synthase, mitochondrial (lias) from Xenopus laevis (African clawed frog).